The chain runs to 339 residues: Diacylglycerol acyltransferase/mycolyltransferase Ag85A (339 aa).

Residues 1–43 (MKLVDRFRGAVTGMPRRLMVGAVGAALLSGLVGFVGGSATASA) form the signal peptide. Substrate is bound at residue 85–86 (MR). Residues 101-111 (FEWYNQSGISV) form a fibronectin-binding region. C130 and C135 form a disulfide bridge. Substrate contacts are provided by S169 and D197. The active-site Nucleophile is the S169. The active site involves E272. Substrate contacts are provided by residues 274–277 (FVRT), K281, and 304–306 (HDW). H304 is a catalytic residue.

This sequence belongs to the mycobacterial A85 antigen family. In terms of assembly, homodimer.

It localises to the secreted. The protein resides in the cell wall. Its subcellular location is the cytoplasm. The enzyme catalyses an acyl-CoA + a 1,2-diacyl-sn-glycerol = a triacyl-sn-glycerol + CoA. It catalyses the reaction 2 alpha,alpha'-trehalose 6-mycolate = alpha,alpha'-trehalose 6,6'-bismycolate + alpha,alpha-trehalose. The antigen 85 proteins (FbpA, FbpB, FbpC) are responsible for the high affinity of mycobacteria for fibronectin, a large adhesive glycoprotein, which facilitates the attachment of M.tuberculosis to murine alveolar macrophages (AMs). They also help to maintain the integrity of the cell wall by catalyzing the transfer of mycolic acids to cell wall arabinogalactan, and through the synthesis of alpha,alpha-trehalose dimycolate (TDM, cord factor). They catalyze the transfer of a mycoloyl residue from one molecule of alpha,alpha-trehalose monomycolate (TMM) to another TMM, leading to the formation of TDM. FbpA mediates triacylglycerol (TAG) formation with long-chain acyl-CoA as the acyl donor and 1,2-dipalmitoyl-sn-glycerol (1,2-dipalmitin) as the acyl acceptor. It has a preference for C26:0-CoA over C18:1-CoA. The protein is Diacylglycerol acyltransferase/mycolyltransferase Ag85A (fbpA) of Mycobacterium gordonae.